The following is a 578-amino-acid chain: MKASRFFIGTLKEAPADAEIVSHKLMVRAGMIRRVAGGIYNYLPVGLRSIRKVEAIVREEMNRAGAIELLMPAVQPAELWQESGRWEQYGPELLRFKDRKDNDFVIGPTHEEVVTDIARNQIKSYRQMPVNFYQIQTKFRDEIRPRFGVMRGREFIMKDAYSFDKDAAGLNESYRKMYDAYVRIFTRLGLEFRAVAADSGSIGGNFSHEFHVIADTGEDAIAYCPTSEFAANVEAAEALPLIAERAAPAEAMEKVATPGKAKCEAVAELLSIPLERTIKSIVLATDNEGAEPTIWLVMLRGDHDLNEIKASKLPGLKNHRFATEQEIVEWFGTPPGYLGPVGTKKPVKVIADRTVANMSDFVVGANEVDYHIAGVNWGRDLPEPEVADVRNVKKGDPSPDGKGVIDICRGIEVGHVFQLGTKYSEAMGATFLDESGKPQPMLMGCYGVGITRILGAAIEQNFDDKGIIWPESIAPFEVVLCPMGYDRSDMVRETADKLYAELVAAGIDVILDDRGERPGVMFADWELIGVPHRLVIGERGLKEGKIEYQGRRDAEATLLPADTAAAAVAEKIRAALAH.

It belongs to the class-II aminoacyl-tRNA synthetase family. ProS type 1 subfamily. Homodimer.

The protein localises to the cytoplasm. The catalysed reaction is tRNA(Pro) + L-proline + ATP = L-prolyl-tRNA(Pro) + AMP + diphosphate. In terms of biological role, catalyzes the attachment of proline to tRNA(Pro) in a two-step reaction: proline is first activated by ATP to form Pro-AMP and then transferred to the acceptor end of tRNA(Pro). As ProRS can inadvertently accommodate and process non-cognate amino acids such as alanine and cysteine, to avoid such errors it has two additional distinct editing activities against alanine. One activity is designated as 'pretransfer' editing and involves the tRNA(Pro)-independent hydrolysis of activated Ala-AMP. The other activity is designated 'posttransfer' editing and involves deacylation of mischarged Ala-tRNA(Pro). The misacylated Cys-tRNA(Pro) is not edited by ProRS. The protein is Proline--tRNA ligase of Burkholderia orbicola (strain AU 1054).